We begin with the raw amino-acid sequence, 309 residues long: Porphobilinogen deaminase (309 aa).

Position 241 is an S-(dipyrrolylmethanemethyl)cysteine (Cys241).

Belongs to the HMBS family. In terms of assembly, monomer. It depends on dipyrromethane as a cofactor.

It catalyses the reaction 4 porphobilinogen + H2O = hydroxymethylbilane + 4 NH4(+). It participates in porphyrin-containing compound metabolism; protoporphyrin-IX biosynthesis; coproporphyrinogen-III from 5-aminolevulinate: step 2/4. Functionally, tetrapolymerization of the monopyrrole PBG into the hydroxymethylbilane pre-uroporphyrinogen in several discrete steps. This Bacillus cereus (strain AH187) protein is Porphobilinogen deaminase.